The following is a 150-amino-acid chain: SsrA-binding protein (150 aa).

It belongs to the SmpB family.

Its subcellular location is the cytoplasm. Required for rescue of stalled ribosomes mediated by trans-translation. Binds to transfer-messenger RNA (tmRNA), required for stable association of tmRNA with ribosomes. tmRNA and SmpB together mimic tRNA shape, replacing the anticodon stem-loop with SmpB. tmRNA is encoded by the ssrA gene; the 2 termini fold to resemble tRNA(Ala) and it encodes a 'tag peptide', a short internal open reading frame. During trans-translation Ala-aminoacylated tmRNA acts like a tRNA, entering the A-site of stalled ribosomes, displacing the stalled mRNA. The ribosome then switches to translate the ORF on the tmRNA; the nascent peptide is terminated with the 'tag peptide' encoded by the tmRNA and targeted for degradation. The ribosome is freed to recommence translation, which seems to be the essential function of trans-translation. This chain is SsrA-binding protein, found in Borreliella afzelii (strain PKo) (Borrelia afzelii).